The sequence spans 149 residues: Detocs response regulatory protein DtcB (149 aa).

A Response regulatory domain is found at Met-1–Asn-134. Asp-53 carries the 4-aspartylphosphate modification.

Post-translationally, probably phosphorylated by DtcA.

Functionally, possible phosphate scavenger member of the two-component regulatory system Detocs that confers resistance to bacteriophage. When the system (DtcA-DtcB-DtcC) is expressed in a susceptible E.coli (strain MG1655) it confers resistance to bacteriophages T2, T4, T5, T6 and SECphi27. Detocs inhibits T5 infection leading to growth arrest but not complete cell lysis, during SECphi27 infection leads to cell lysis. Overexpression of this protein along with the intact Detocs locus cancels T5 immunity; when the phosphate-receiving Asp-53 is mutated to Ala in this protein, immunity is restored. DtcA probably autophosphorylates upon sensing viral infection, and subsequently transfers the phosphate signal to DtcC which activates it, leading to an antiviral defense; DtcB (this subunit) may scavenge phosphorylation signals from accidental activation of DtcA. The chain is Detocs response regulatory protein DtcB from Vibrio alginolyticus.